Here is a 274-residue protein sequence, read N- to C-terminus: Large ribosomal subunit protein uL2cz/uL2cy (274 aa).

Polar residues predominate over residues Met-1–Asn-15. 2 disordered regions span residues Met-1–Val-22 and Pro-225–Lys-274.

This sequence belongs to the universal ribosomal protein uL2 family. As to quaternary structure, part of the 50S ribosomal subunit.

The protein resides in the plastid. The protein localises to the chloroplast. This chain is Large ribosomal subunit protein uL2cz/uL2cy (rpl2-A), found in Lobularia maritima (Sweet alyssum).